The chain runs to 504 residues: Glycerol kinase (504 aa).

Threonine 13 is an ADP binding site. Threonine 13, threonine 14, and serine 15 together coordinate ATP. Position 13 (threonine 13) interacts with sn-glycerol 3-phosphate. Arginine 17 serves as a coordination point for ADP. The sn-glycerol 3-phosphate site is built by arginine 83, glutamate 84, and tyrosine 135. Glycerol is bound by residues arginine 83, glutamate 84, and tyrosine 135. Histidine 231 bears the Phosphohistidine; by HPr mark. Aspartate 245 is a binding site for sn-glycerol 3-phosphate. Positions 245 and 246 each coordinate glycerol. ADP-binding residues include threonine 267 and glycine 310. ATP-binding residues include threonine 267, glycine 310, glutamine 314, and glycine 411. Residues glycine 411 and asparagine 415 each contribute to the ADP site.

It belongs to the FGGY kinase family. In terms of assembly, homotetramer and homodimer (in equilibrium). In terms of processing, the phosphoenolpyruvate-dependent sugar phosphotransferase system (PTS), including enzyme I, and histidine-containing protein (HPr) are required for the phosphorylation, which leads to the activation of the enzyme.

It carries out the reaction glycerol + ATP = sn-glycerol 3-phosphate + ADP + H(+). Its pathway is polyol metabolism; glycerol degradation via glycerol kinase pathway; sn-glycerol 3-phosphate from glycerol: step 1/1. With respect to regulation, activated by phosphorylation and inhibited by fructose 1,6-bisphosphate (FBP). In terms of biological role, key enzyme in the regulation of glycerol uptake and metabolism. Catalyzes the phosphorylation of glycerol to yield sn-glycerol 3-phosphate. This chain is Glycerol kinase, found in Pediococcus pentosaceus (strain ATCC 25745 / CCUG 21536 / LMG 10740 / 183-1w).